Reading from the N-terminus, the 356-residue chain is tRNA pseudouridine synthase D (356 aa).

The Nucleophile role is filled by Asp84. One can recognise a TRUD domain in the interval 159-302 (GVPNYYGPQR…RRGARRPIRV (144 aa)).

The protein belongs to the pseudouridine synthase TruD family.

It catalyses the reaction uridine(13) in tRNA = pseudouridine(13) in tRNA. Functionally, responsible for synthesis of pseudouridine from uracil-13 in transfer RNAs. This chain is tRNA pseudouridine synthase D, found in Thermus thermophilus (strain ATCC BAA-163 / DSM 7039 / HB27).